We begin with the raw amino-acid sequence, 1224 residues long: Cytosolic carboxypeptidase 1 (1224 aa).

The segment at 361 to 398 (PPDVDDVVDESDDNDDAETESEIETEDDKDQNFKNDDI) is disordered. Acidic residues predominate over residues 363-389 (DVDDVVDESDDNDDAETESEIETEDDK). The Peptidase M14 domain occupies 846 to 1136 (YPYTYSTLKM…KFCVGLLRLK (291 aa)). Zn(2+) contacts are provided by His-918, Glu-921, and His-1015. The active-site Proton donor/acceptor is the Glu-1100. Positions 1186-1197 (SAESNDDQDAEL) are enriched in acidic residues. The tract at residues 1186 to 1224 (SAESNDDQDAELADNVGDYEANNQEDGLSDSDSTRILLS) is disordered. Residues 1206 to 1224 (ANNQEDGLSDSDSTRILLS) show a composition bias toward polar residues.

Belongs to the peptidase M14 family. The cofactor is Zn(2+).

Its subcellular location is the cytoplasm. It is found in the cytosol. The protein localises to the nucleus. It localises to the mitochondrion. It catalyses the reaction (L-glutamyl)(n+1)-gamma-L-glutamyl-L-glutamyl-[protein] + H2O = (L-glutamyl)(n)-gamma-L-glutamyl-L-glutamyl-[protein] + L-glutamate. The enzyme catalyses C-terminal L-alpha-aminoacyl-L-glutamyl-L-glutamyl-[tubulin] + H2O = C-terminal L-alpha-aminoacyl-L-glutamyl-[tubulin] + L-glutamate. Metallocarboxypeptidase that mediates protein deglutamylation of tubulin and non-tubulin target proteins. Catalyzes the removal of polyglutamate side chains present on the gamma-carboxyl group of glutamate residues within the C-terminal tail of alpha- and beta-tubulin. Specifically cleaves tubulin long-side-chains, while it is not able to remove the branching point glutamate. Also catalyzes the removal of polyglutamate residues from the carboxy-terminus of alpha-tubulin as well as non-tubulin proteins. The sequence is that of Cytosolic carboxypeptidase 1 (AGTPBP1) from Gallus gallus (Chicken).